The chain runs to 316 residues: 4-hydroxy-3-methylbut-2-enyl diphosphate reductase (316 aa).

Cysteine 12 contacts [4Fe-4S] cluster. Histidine 41 and histidine 74 together coordinate (2E)-4-hydroxy-3-methylbut-2-enyl diphosphate. Residues histidine 41 and histidine 74 each contribute to the dimethylallyl diphosphate site. Positions 41 and 74 each coordinate isopentenyl diphosphate. Cysteine 96 contacts [4Fe-4S] cluster. Histidine 124 contributes to the (2E)-4-hydroxy-3-methylbut-2-enyl diphosphate binding site. Histidine 124 contacts dimethylallyl diphosphate. Histidine 124 is a binding site for isopentenyl diphosphate. Glutamate 126 serves as the catalytic Proton donor. Position 167 (threonine 167) interacts with (2E)-4-hydroxy-3-methylbut-2-enyl diphosphate. Cysteine 197 lines the [4Fe-4S] cluster pocket. Residues serine 225, serine 226, asparagine 227, and serine 269 each coordinate (2E)-4-hydroxy-3-methylbut-2-enyl diphosphate. Dimethylallyl diphosphate contacts are provided by serine 225, serine 226, asparagine 227, and serine 269. Positions 225, 226, 227, and 269 each coordinate isopentenyl diphosphate.

It belongs to the IspH family. As to quaternary structure, homodimer. The cofactor is [4Fe-4S] cluster.

It catalyses the reaction isopentenyl diphosphate + 2 oxidized [2Fe-2S]-[ferredoxin] + H2O = (2E)-4-hydroxy-3-methylbut-2-enyl diphosphate + 2 reduced [2Fe-2S]-[ferredoxin] + 2 H(+). The catalysed reaction is dimethylallyl diphosphate + 2 oxidized [2Fe-2S]-[ferredoxin] + H2O = (2E)-4-hydroxy-3-methylbut-2-enyl diphosphate + 2 reduced [2Fe-2S]-[ferredoxin] + 2 H(+). Its pathway is isoprenoid biosynthesis; dimethylallyl diphosphate biosynthesis; dimethylallyl diphosphate from (2E)-4-hydroxy-3-methylbutenyl diphosphate: step 1/1. It functions in the pathway isoprenoid biosynthesis; isopentenyl diphosphate biosynthesis via DXP pathway; isopentenyl diphosphate from 1-deoxy-D-xylulose 5-phosphate: step 6/6. Functionally, catalyzes the conversion of 1-hydroxy-2-methyl-2-(E)-butenyl 4-diphosphate (HMBPP) into a mixture of isopentenyl diphosphate (IPP) and dimethylallyl diphosphate (DMAPP). Acts in the terminal step of the DOXP/MEP pathway for isoprenoid precursor biosynthesis. This is 4-hydroxy-3-methylbut-2-enyl diphosphate reductase from Escherichia coli (strain ATCC 8739 / DSM 1576 / NBRC 3972 / NCIMB 8545 / WDCM 00012 / Crooks).